Reading from the N-terminus, the 289-residue chain is 4-diphosphocytidyl-2-C-methyl-D-erythritol kinase (289 aa).

The active site involves Lys16. Residue 99–109 (PMGGGLGGGSS) participates in ATP binding. Asp141 is an active-site residue.

The protein belongs to the GHMP kinase family. IspE subfamily.

It carries out the reaction 4-CDP-2-C-methyl-D-erythritol + ATP = 4-CDP-2-C-methyl-D-erythritol 2-phosphate + ADP + H(+). It participates in isoprenoid biosynthesis; isopentenyl diphosphate biosynthesis via DXP pathway; isopentenyl diphosphate from 1-deoxy-D-xylulose 5-phosphate: step 3/6. In terms of biological role, catalyzes the phosphorylation of the position 2 hydroxy group of 4-diphosphocytidyl-2C-methyl-D-erythritol. This Ralstonia pickettii (strain 12J) protein is 4-diphosphocytidyl-2-C-methyl-D-erythritol kinase.